Here is a 1318-residue protein sequence, read N- to C-terminus: MAEAKSAPIFRNRVIDKKQLKKLIGWTFAHYGTAKTAVVADDLKALGFRYATRAGVSISIDDLKVPGSKAELLESAEKRIQETEDRYTRGEITEVERFQKVIDTWANTNDELTDRVVKNFRESDPLNSVYMMAFSGARGNISQVRQLVGMRGLMANPQGEIIDLPIKTNFREGLTVTEYIISSYGARKGLVDTALRTADSGYLTRRLVDVSQDVIIHEVDCGTSRGLFVEAMTDGDRILIPISQRLLGRVTAEAVLDPSTDEVLAEAGQDINEDLANRIEKAGIKKVKVRSPLTCEAARSVCQKCYGWSLAHAQMVDMGEAVGIIAAQSIGEPGTQLTMRTFHTGGVFTGETARLLRAPVAGTIKLGKKARTRPYRTRHGEEALLAEANFDLVLEGKGRKETFAILQGSTIFVQDGDKVAAEAILAEVPVSGRTKRTVEKATKDVATDLAGEIRFQDIVPEEKTDRQGNTTRIAQRGGLLWVLAGDVYNLLPGAEPTVKNGDRVEVGDVLAETKLTTERGGTVRMGEDNGSSTHREVEIITASVVLDTATVKAEASQGREHYVIETKGGQRFNLLAAPGTKVTTGHVVAELIDSRYRTQTGGLLKYSGVEISKKGRAKAKQGYEVTKGGTLLWIPEETHEVNKDISLLNVEDGQLVEAGTEVVKDIFCQTTGIVSVTQNNDILREIVIKPGDVHVLDDPDTAAKYDEGRLVNAGEEVFPGLTAEQLVWAEAVDGTDGPLLLLRPVQELVIPDEPPVPSQDSSQESSSRSIRLRAVQRLQFQDGERIKSVEGVDLLRTQLVLESEEGSSQLSADIELLPDSKDPETLRLQLVIIEPVVIRRDVASDTTHGSTHTELRVKDGQKVKPGAVIACTQIQCKEAGVVRGIQEGSEAVRRLLVERERDCVTLDLDVTAATQLQPGSLIVAGTQLVDGIIAPESGEVRAIAPGQLQLRIARPYRVSQGAVLHVEDKGLVQRGDNLVLLVFERAKTGDIIQGLPRIEELLEARKPKEACILARRPGVAHINYSDDDAIDIQVIEADGTQADYPVGPGQPLIISDGETVDAGQALTDGPANPHDLLEIYYDYFREQLGEDYEAALESLRRVQALLVNEVQSVYQSQGIDISDKHIEVIVRQMTSKVRIDDGGDTIMLPGELHELREVYNSNNTMALTGMAPAQFTPVLLGITKASLNTNSFISAASFQETTRVLTEAAIEGKSDWLRGLKENVIIGRLIPAGTGFKAYEESLLTDVDGGYEDRVYDDDLADVVIDDRAARSYTLNEGRDFSRSMTFAEGESMILDDGEELIDDSSASLRNLVDVDED.

Zn(2+) contacts are provided by cysteine 221, cysteine 295, cysteine 302, and cysteine 305.

It belongs to the RNA polymerase beta' chain family. RpoC2 subfamily. In cyanobacteria the RNAP catalytic core is composed of 2 alpha, 1 beta, 1 beta', 1 gamma and 1 omega subunit. When a sigma factor is associated with the core the holoenzyme is formed, which can initiate transcription. It depends on Zn(2+) as a cofactor.

It catalyses the reaction RNA(n) + a ribonucleoside 5'-triphosphate = RNA(n+1) + diphosphate. Functionally, DNA-dependent RNA polymerase catalyzes the transcription of DNA into RNA using the four ribonucleoside triphosphates as substrates. This Synechococcus elongatus (strain ATCC 33912 / PCC 7942 / FACHB-805) (Anacystis nidulans R2) protein is DNA-directed RNA polymerase subunit beta'.